Here is a 242-residue protein sequence, read N- to C-terminus: N-alpha-acetyltransferase 60 (242 aa).

Topologically, residues 1-192 are cytoplasmic; sequence MTEVVPSSAL…GGHPPWTILD (192 aa). In terms of domain architecture, N-acetyltransferase spans 13-182; it reads VSLRLLCHDD…DGFTYVLYIN (170 aa). Tyrosine 38 serves as a coordination point for substrate. The residue at position 79 (lysine 79) is an N6-acetyllysine; by autocatalysis. Tyrosine 97 is a catalytic residue. Leucine 99 is a binding site for substrate. Position 101–103 (101–103) interacts with acetyl-CoA; the sequence is LGV. N6-acetyllysine; by autocatalysis occurs at positions 105, 109, and 121. 109–114 is an acetyl-CoA binding site; it reads KHGIGS. Residue histidine 138 is part of the active site. Acetyl-CoA is bound by residues asparagine 143 and 150 to 153; that span reads YENR. Residues 162-173 form a required for homodimerization region; it reads PYYYSIRGVLKD. Tyrosine 165 lines the substrate pocket. The helical intramembrane region spans 193–236; the sequence is YIQHLGSALANLSPCSIPHRIYRQAHSLLCSFLPWSSISTKGGI. Topologically, residues 237-242 are cytoplasmic; the sequence is EYSRTM.

It belongs to the acetyltransferase family. NAA60 subfamily. In terms of assembly, monomer and homodimer; monomer in presence of substrate and homodimer in its absence. Acetylated: autoacetylation is required for optimal acetyltransferase activity.

It localises to the golgi apparatus membrane. The catalysed reaction is N-terminal L-methionyl-[transmembrane protein] + acetyl-CoA = N-terminal N(alpha)-acetyl-L-methionyl-[transmembrane protein] + CoA + H(+). It carries out the reaction L-lysyl-[protein] + acetyl-CoA = N(6)-acetyl-L-lysyl-[protein] + CoA + H(+). Its function is as follows. N-alpha-acetyltransferase that specifically mediates the acetylation of N-terminal residues of the transmembrane proteins, with a strong preference for N-termini facing the cytosol. Displays N-terminal acetyltransferase activity towards a range of N-terminal sequences including those starting with Met-Lys, Met-Val, Met-Ala and Met-Met. Required for normal chromosomal segregation during anaphase. May also show histone acetyltransferase activity; such results are however unclear in vivo and would require additional experimental evidences. The protein is N-alpha-acetyltransferase 60 (Naa60) of Mus musculus (Mouse).